A 259-amino-acid chain; its full sequence is DNA-directed RNA polymerase subunit Rpo3 (259 aa).

This sequence belongs to the archaeal Rpo3/eukaryotic RPB3 RNA polymerase subunit family. Part of the RNA polymerase complex.

It localises to the cytoplasm. The enzyme catalyses RNA(n) + a ribonucleoside 5'-triphosphate = RNA(n+1) + diphosphate. In terms of biological role, DNA-dependent RNA polymerase (RNAP) catalyzes the transcription of DNA into RNA using the four ribonucleoside triphosphates as substrates. The chain is DNA-directed RNA polymerase subunit Rpo3 from Thermococcus kodakarensis (strain ATCC BAA-918 / JCM 12380 / KOD1) (Pyrococcus kodakaraensis (strain KOD1)).